The following is a 397-amino-acid chain: Elongation factor Tu (397 aa).

The 198-residue stretch at 10–207 (KPHVNIGTIG…AVDESIPEPV (198 aa)) folds into the tr-type G domain. The interval 19 to 26 (GHVDHGKT) is G1. 19 to 26 (GHVDHGKT) provides a ligand contact to GTP. Thr-26 provides a ligand contact to Mg(2+). Positions 63–67 (GITIN) are G2. The interval 84-87 (DAPG) is G3. Residues 84-88 (DAPGH) and 139-142 (NKSD) contribute to the GTP site. The segment at 139 to 142 (NKSD) is G4. Residues 177–179 (SGL) form a G5 region.

The protein belongs to the TRAFAC class translation factor GTPase superfamily. Classic translation factor GTPase family. EF-Tu/EF-1A subfamily. Monomer.

It is found in the cytoplasm. The catalysed reaction is GTP + H2O = GDP + phosphate + H(+). In terms of biological role, GTP hydrolase that promotes the GTP-dependent binding of aminoacyl-tRNA to the A-site of ribosomes during protein biosynthesis. In Clavibacter sepedonicus (Clavibacter michiganensis subsp. sepedonicus), this protein is Elongation factor Tu.